The chain runs to 238 residues: Small proline-rich protein 3 (238 aa).

Positions 1 to 67 (MSSYQQKQPF…CSTKVPEPGN (67 aa)) are disordered. Ser-2 bears the N-acetylserine mark. 21 consecutive repeat copies span residues 52 to 59 (TKIPEPCS), 60 to 67 (TKVPEPGN), 68 to 75 (TVVLEPDY), 76 to 83 (TTMPGPCS), 84 to 91 (TNITEPDY), 92 to 99 (TTIPGPCS), 100 to 107 (TNITEPDY), 108 to 115 (TTIPGPCS), 116 to 123 (TNIPGPDR), 124 to 131 (TVVPGSCS), 132 to 139 (TNITEPDY), 140 to 147 (TTIPGPSS), 148 to 155 (TKIPDPGC), 156 to 163 (AMVPGPSP), 164 to 175 (SSTSEPSSEPCS), 176 to 183 (INVREPGY), 184 to 191 (MNASEPTH), 192 to 199 (AKVPDQGY), 200 to 207 (TKIPDQGS), 208 to 215 (SKVPEPCQ), and 216 to 223 (SRVPEVCP). The 21 X 8 AA approximate tandem repeats stretch occupies residues 52–223 (TKIPEPCSTK…CQSRVPEVCP (172 aa)). A disordered region spans residues 110–238 (IPGPCSTNIP…VSAKQKTKQK (129 aa)). Over residues 163 to 175 (PSSTSEPSSEPCS) the composition is skewed to low complexity.

It belongs to the cornifin (SPRR) family.

It is found in the cytoplasm. In terms of biological role, cross-linked envelope protein of keratinocytes. This Mus musculus (Mouse) protein is Small proline-rich protein 3 (Sprr3).